Reading from the N-terminus, the 169-residue chain is dCTP pyrophosphatase 1 (169 aa).

The interval 1–26 (MSASEEMLGGARGESTTATGPFSFSS) is disordered. Residues 14-26 (ESTTATGPFSFSS) are compositionally biased toward polar residues. Residues His37 and 46 to 50 (WEQFH) contribute to the substrate site. The Mg(2+) site is built by Glu62 and Glu65. A substrate-binding site is contributed by Trp72. Residue Ser84 is modified to Phosphoserine. 2 residues coordinate Mg(2+): Glu94 and Asp97. Tyr101 contributes to the substrate binding site. The segment at 143-169 (LPHGATSENQAMGPADPASESTGQVST) is disordered.

As to quaternary structure, homotetramer. Requires Mg(2+) as cofactor.

It localises to the cytoplasm. Its subcellular location is the cytosol. The catalysed reaction is dCTP + H2O = dCMP + diphosphate + H(+). Hydrolyzes deoxynucleoside triphosphates (dNTPs) to the corresponding nucleoside monophosphates. Has a strong preference for dCTP and its analogs including 5-iodo-dCTP and 5-methyl-dCTP for which it may even have a higher efficiency. May protect DNA or RNA against the incorporation of these genotoxic nucleotide analogs through their catabolism. The sequence is that of dCTP pyrophosphatase 1 from Bos taurus (Bovine).